The primary structure comprises 553 residues: Urocanate hydratase (553 aa).

Residues 45 to 46, glutamine 123, 169 to 171, aspartate 189, arginine 194, 235 to 236, 256 to 260, 266 to 267, tyrosine 315, and glycine 485 each bind NAD(+); these read GG, GMG, NA, QTSAH, and YV.

It belongs to the urocanase family. NAD(+) is required as a cofactor.

It localises to the cytoplasm. It catalyses the reaction 4-imidazolone-5-propanoate = trans-urocanate + H2O. Its pathway is amino-acid degradation; L-histidine degradation into L-glutamate; N-formimidoyl-L-glutamate from L-histidine: step 2/3. Catalyzes the conversion of urocanate to 4-imidazolone-5-propionate. In Staphylococcus aureus (strain MRSA252), this protein is Urocanate hydratase.